A 98-amino-acid chain; its full sequence is Homeobox protein SMOX-4 (98 aa).

Residues 37–96 (SFRNRTAFTDYQLICLEREFSHIQYLSRIDRIHLAQNLNLTEKQVKIWFQNRRVRWRKRN) constitute a DNA-binding region (homeobox).

It localises to the nucleus. The sequence is that of Homeobox protein SMOX-4 (SMOX-4) from Schistosoma mansoni (Blood fluke).